Consider the following 573-residue polypeptide: MAKVVLKAPDGPPSDVERIKRESRYLRGTLAETMEDPISAGIPDDDNRLMKFHGSYLQDDRDVRTERQKQKLEPAYQFMIRVRTPGGVATPEQWLVMDEIARKYANGTLKLTTRQAFQLHGVLKWNVKKTMQAINGALMTTLAACGDVNRNVMCNPNPYQSEVHAEVYEWAKLLSDHLLPKTRAYYEIWLDDEKVAGTPQVDGEEEPIYGPTYLPRKFKIGIAVPPSNDVDVFSQDIGLIAIVEDGKLAGFNVAIGGGMGMTHGDKTTYPQLAKVIGFCTPDQVVEVAEKIMTVQRDYGNRSVRKNARFKYTIDRLGLEVVKEEIERRLGWKLGEARPYHFEHNGDRYGWVEGVNGTWHFTLYVEGGRVKDDDDYKLMTGLREIAKVHTGDFRLTANQNLVIANVTSEKKAEIEALIAKYGLTDGKRYTALRRNSLACVALPTCGLAMAEAERYLPKLLDKIEEIIDENGLRDEEITIRMTGCPNGCARHVLAEIAFVGKAVGKYNMYLGAAFNGTRLGKLYRENIGEEEILRELRVLLARYAKERLDGEHFGDFVIRAGIVKEVTDGTNFHD.

[4Fe-4S] cluster-binding residues include Cys438, Cys444, Cys483, and Cys487. Cys487 is a binding site for siroheme.

Belongs to the nitrite and sulfite reductase 4Fe-4S domain family. Alpha(8)-beta(8). The alpha component is a flavoprotein, the beta component is a hemoprotein. Requires siroheme as cofactor. The cofactor is [4Fe-4S] cluster.

The enzyme catalyses hydrogen sulfide + 3 NADP(+) + 3 H2O = sulfite + 3 NADPH + 4 H(+). Its pathway is sulfur metabolism; hydrogen sulfide biosynthesis; hydrogen sulfide from sulfite (NADPH route): step 1/1. Its function is as follows. Component of the sulfite reductase complex that catalyzes the 6-electron reduction of sulfite to sulfide. This is one of several activities required for the biosynthesis of L-cysteine from sulfate. The chain is Sulfite reductase [NADPH] hemoprotein beta-component from Geobacillus thermodenitrificans (strain NG80-2).